Here is a 182-residue protein sequence, read N- to C-terminus: MKGKETMSKQNEKLVVGKLGSSYGIRGWLKVFSYTDNPESIFDYSPWYIDQKGEWVEYKVEGWKRHNKGWVVKLQGLDVREDAHLLTNFEIAIDPASLPELSEDEFYWRELFGMQVVTTNGYDLGVVTDMMETGSNDVLVVKANLKDAFGQKERLIPFLEEQVIKVVDRQAQRIEVDWDPAF.

Positions 103–182 (EDEFYWRELF…RIEVDWDPAF (80 aa)) constitute a PRC barrel domain.

This sequence belongs to the RimM family. As to quaternary structure, binds ribosomal protein uS19.

It localises to the cytoplasm. An accessory protein needed during the final step in the assembly of 30S ribosomal subunit, possibly for assembly of the head region. Essential for efficient processing of 16S rRNA. May be needed both before and after RbfA during the maturation of 16S rRNA. It has affinity for free ribosomal 30S subunits but not for 70S ribosomes. The chain is Ribosome maturation factor RimM from Vibrio cholerae serotype O1 (strain ATCC 39315 / El Tor Inaba N16961).